The following is a 258-amino-acid chain: Diacetyl reductase [(S)-acetoin forming] (258 aa).

Position 8-32 (leucine 8–alanine 32) interacts with NAD(+). Position 141 (serine 141) interacts with substrate. Catalysis depends on tyrosine 154, which acts as the Proton acceptor. Residue lysine 158 is part of the active site.

This sequence belongs to the short-chain dehydrogenases/reductases (SDR) family.

The catalysed reaction is (S)-acetoin + NAD(+) = diacetyl + NADH + H(+). Functionally, catalyzes the irreversible reduction of 2,3-butanediol to (S)-acetoin in the presence of NADH. This chain is Diacetyl reductase [(S)-acetoin forming] (butA), found in Staphylococcus aureus (strain Mu50 / ATCC 700699).